Reading from the N-terminus, the 255-residue chain is Imidazole glycerol phosphate synthase subunit HisF (255 aa).

Catalysis depends on residues Asp-12 and Asp-131.

This sequence belongs to the HisA/HisF family. In terms of assembly, heterodimer of HisH and HisF.

It is found in the cytoplasm. The catalysed reaction is 5-[(5-phospho-1-deoxy-D-ribulos-1-ylimino)methylamino]-1-(5-phospho-beta-D-ribosyl)imidazole-4-carboxamide + L-glutamine = D-erythro-1-(imidazol-4-yl)glycerol 3-phosphate + 5-amino-1-(5-phospho-beta-D-ribosyl)imidazole-4-carboxamide + L-glutamate + H(+). Its pathway is amino-acid biosynthesis; L-histidine biosynthesis; L-histidine from 5-phospho-alpha-D-ribose 1-diphosphate: step 5/9. Functionally, IGPS catalyzes the conversion of PRFAR and glutamine to IGP, AICAR and glutamate. The HisF subunit catalyzes the cyclization activity that produces IGP and AICAR from PRFAR using the ammonia provided by the HisH subunit. The chain is Imidazole glycerol phosphate synthase subunit HisF from Neisseria meningitidis serogroup C / serotype 2a (strain ATCC 700532 / DSM 15464 / FAM18).